We begin with the raw amino-acid sequence, 466 residues long: Ribulose bisphosphate carboxylase large chain (466 aa).

Residue K5 is modified to N6,N6,N6-trimethyllysine. Substrate is bound by residues N114 and T164. K166 acts as the Proton acceptor in catalysis. A substrate-binding site is contributed by K168. Mg(2+) contacts are provided by K192, D194, and E195. K192 bears the N6-carboxylysine mark. H285 (proton acceptor) is an active-site residue. Residues R286, H318, and S370 each coordinate substrate.

The protein belongs to the RuBisCO large chain family. Type I subfamily. In terms of assembly, heterohexadecamer of 8 large chains and 8 small chains; disulfide-linked. The disulfide link is formed within the large subunit homodimers. The cofactor is Mg(2+). Post-translationally, the disulfide bond which can form in the large chain dimeric partners within the hexadecamer appears to be associated with oxidative stress and protein turnover.

Its subcellular location is the plastid. The protein localises to the chloroplast. It carries out the reaction 2 (2R)-3-phosphoglycerate + 2 H(+) = D-ribulose 1,5-bisphosphate + CO2 + H2O. It catalyses the reaction D-ribulose 1,5-bisphosphate + O2 = 2-phosphoglycolate + (2R)-3-phosphoglycerate + 2 H(+). In terms of biological role, ruBisCO catalyzes two reactions: the carboxylation of D-ribulose 1,5-bisphosphate, the primary event in carbon dioxide fixation, as well as the oxidative fragmentation of the pentose substrate in the photorespiration process. Both reactions occur simultaneously and in competition at the same active site. The polypeptide is Ribulose bisphosphate carboxylase large chain (Drosera filiformis (Thread-leaved sundew)).